The primary structure comprises 452 residues: Probable multidrug resistance protein NorM (452 aa).

12 helical membrane-spanning segments follow: residues 12-34 (RQFLTILIPILITQAGLSLITVL), 49-71 (GVAIGSSLWTPVYTGLAGILTAV), 91-113 (VIQSIYVAGIISLAVIVSGYFLI), 128-150 (VIAKQYLICIGLGILPLFVYNVM), 162-184 (VTMLITLCSLPINFVLNYLFIFG), 194-216 (AGAGLASAITYWCICLISLYIVH), 245-267 (GIPIGFAIFFETSIFAAVTLLMS), 282-304 (NFASLLYMLPLSVSMTLTIVVGF), 317-339 (YSYLGISIAVGFSLFTALIILLF), 359-381 (DFLLYALFFQLSDAIAAPIQGAL), 388-410 (NYTLVTALVSYWIIGLPVGFVIG), and 415-437 (FGAFGYWIGLITGLAAGAVGLFF).

This sequence belongs to the multi antimicrobial extrusion (MATE) (TC 2.A.66.1) family.

The protein localises to the cell membrane. In terms of biological role, multidrug efflux pump. The polypeptide is Probable multidrug resistance protein NorM (norM) (Bacillus licheniformis (strain ATCC 14580 / DSM 13 / JCM 2505 / CCUG 7422 / NBRC 12200 / NCIMB 9375 / NCTC 10341 / NRRL NRS-1264 / Gibson 46)).